Here is a 275-residue protein sequence, read N- to C-terminus: Phosphate import ATP-binding protein PstB 1 (275 aa).

The ABC transporter domain maps to 22-261 (LETQAVSVYY…NRTEKIFNSP (240 aa)). 54-61 (GPSGCGKS) contacts ATP.

The protein belongs to the ABC transporter superfamily. Phosphate importer (TC 3.A.1.7) family. In terms of assembly, the complex is composed of two ATP-binding proteins (PstB), two transmembrane proteins (PstC and PstA) and a solute-binding protein (PstS).

Its subcellular location is the cell inner membrane. It carries out the reaction phosphate(out) + ATP + H2O = ADP + 2 phosphate(in) + H(+). Part of the ABC transporter complex PstSACB involved in phosphate import. Responsible for energy coupling to the transport system. This is Phosphate import ATP-binding protein PstB 1 from Synechococcus sp. (strain JA-2-3B'a(2-13)) (Cyanobacteria bacterium Yellowstone B-Prime).